The primary structure comprises 300 residues: ADP-ribosyl cyclase/cyclic ADP-ribose hydrolase 1 (300 aa).

Residues 1–21 (MANCEFSPVSGDKPCCRLSRR) are Cytoplasmic-facing. A helical; Signal-anchor for type II membrane protein transmembrane segment spans residues 22–42 (AQLCLGVSILVLILVVVLAVV). The Extracellular portion of the chain corresponds to 43 to 300 (VPRWRQQWSG…PEDSSCTSEI (258 aa)). 3 disulfides stabilise this stretch: Cys-67/Cys-82, Cys-99/Cys-180, and Cys-160/Cys-173. An N-linked (GlcNAc...) asparagine glycan is attached at Asn-100. The active site involves Cys-119. Residue Asn-164 is glycosylated (N-linked (GlcNAc...) asparagine). Cys-201 is an active-site residue. Residues Asn-209 and Asn-219 are each glycosylated (N-linked (GlcNAc...) asparagine). 2 cysteine pairs are disulfide-bonded: Cys-254/Cys-275 and Cys-287/Cys-296.

It belongs to the ADP-ribosyl cyclase family. In terms of assembly, homodimer. As to expression, expressed at high levels in pancreas, liver, kidney, brain, testis, ovary, placenta, malignant lymphoma and neuroblastoma.

It is found in the cell surface. The protein resides in the membrane. The enzyme catalyses 2'-phospho-cyclic ADP-ribose + nicotinate = nicotinate-adenine dinucleotide phosphate. The catalysed reaction is NAD(+) = cyclic ADP-beta-D-ribose + nicotinamide + H(+). It carries out the reaction NAD(+) + H2O = ADP-D-ribose + nicotinamide + H(+). It catalyses the reaction cyclic ADP-beta-D-ribose + H2O = ADP-D-ribose. The enzyme catalyses NADP(+) = 2'-phospho-cyclic ADP-ribose + nicotinamide. The catalysed reaction is nicotinate + NADP(+) = nicotinate-adenine dinucleotide phosphate + nicotinamide. With respect to regulation, ATP inhibits the cADPR hydrolyzing activity. Its function is as follows. Synthesizes cyclic ADP-ribose (cADPR), a second messenger for glucose-induced insulin secretion. Synthesizes the Ca(2+) mobilizer nicotinate-adenine dinucleotide phosphate, NAADP(+), from 2'-phospho-cADPR and nicotinic acid, as well as from NADP(+) and nicotinic acid. At both pH 5.0 and pH 7.4 preferentially transforms 2'-phospho-cADPR into NAADP(+), while preferentially cleaving NADP(+) to cADPR and ADPRP rather than into NADDP(+). Has cADPR hydrolase activity. The polypeptide is ADP-ribosyl cyclase/cyclic ADP-ribose hydrolase 1 (CD38) (Homo sapiens (Human)).